The primary structure comprises 115 residues: CRISPR-associated endoribonuclease Cas2 (115 aa).

Aspartate 22 contributes to the Mg(2+) binding site.

The protein belongs to the CRISPR-associated endoribonuclease Cas2 protein family. Homodimer, forms a heterotetramer with a Cas1 homodimer. Requires Mg(2+) as cofactor.

Its function is as follows. CRISPR (clustered regularly interspaced short palindromic repeat), is an adaptive immune system that provides protection against mobile genetic elements (viruses, transposable elements and conjugative plasmids). CRISPR clusters contain sequences complementary to antecedent mobile elements and target invading nucleic acids. CRISPR clusters are transcribed and processed into CRISPR RNA (crRNA). Functions as a ssRNA-specific endoribonuclease. Involved in the integration of spacer DNA into the CRISPR cassette. In Flavobacterium psychrophilum (strain ATCC 49511 / DSM 21280 / CIP 103535 / JIP02/86), this protein is CRISPR-associated endoribonuclease Cas2.